The primary structure comprises 231 residues: Aquaporin Z (231 aa).

Transmembrane regions (helical) follow at residues 9 to 29 (CFGTFWLVFGGCGSAVLAAGF) and 34 to 54 (IGFAGVALAFGLTVLTMAFAV). The NPA 1 motif lies at 63–65 (NPA). Helical transmembrane passes span 82–102 (VGYVIAQVVGGIVAAALLYLI), 129–149 (YSMLSALVVELVLSAGFLLVI), and 156–176 (FAPAGFAPIAIGLALTLIHLI). An NPA 2 motif is present at residues 186-188 (NPA). A helical membrane pass occupies residues 202–222 (LEQLWFFWVVPIVGGIIGGLI).

The protein belongs to the MIP/aquaporin (TC 1.A.8) family. In terms of assembly, homotetramer.

The protein localises to the cell inner membrane. It catalyses the reaction H2O(in) = H2O(out). Its function is as follows. Channel that permits osmotically driven movement of water in both directions. It is involved in the osmoregulation and in the maintenance of cell turgor during volume expansion in rapidly growing cells. It mediates rapid entry or exit of water in response to abrupt changes in osmolarity. This is Aquaporin Z from Escherichia coli O6:H1 (strain CFT073 / ATCC 700928 / UPEC).